The sequence spans 144 residues: Probable DNA-directed RNA polymerases I and III subunit RPAC2 (144 aa).

Residues 14–47 (KVEAETMEVDEQPQETPQVDDEEDLNVPSKKKME) are disordered. Residues 18–38 (ETMEVDEQPQETPQVDDEEDL) show a composition bias toward acidic residues.

Belongs to the archaeal Rpo11/eukaryotic RPB11/RPC19 RNA polymerase subunit family. As to quaternary structure, component of the RNA polymerase I (Pol I) and RNA polymerase III (Pol III) complexes consisting of at least 13 and 17 subunits, respectively.

It is found in the nucleus. In terms of biological role, DNA-dependent RNA polymerase catalyzes the transcription of DNA into RNA using the four ribonucleoside triphosphates as substrates. Common core component of RNA polymerases I and III which synthesize ribosomal RNA precursors and small RNAs, such as 5S rRNA and tRNAs, respectively. The polypeptide is Probable DNA-directed RNA polymerases I and III subunit RPAC2 (rpac-19) (Caenorhabditis elegans).